The following is a 287-amino-acid chain: uncharacterized protein (287 aa).

Residues 43-50, 90-93, and 156-159 each bind GTP; these read GKTGAGKS, DLPG, and DKAE. Residues 48–140 form the G domain; the sequence is GKSSLCNALF…TDEHFYRQVI (93 aa).

This sequence to E.coli YkfA and YeeP.

This is an uncharacterized protein from Escherichia coli (strain K12).